The primary structure comprises 311 residues: Mitochondrial FAD carrier protein FLX1 (311 aa).

Solcar repeat units follow at residues threonine 7–leucine 101, methionine 123–arginine 210, and leucine 224–arginine 310. 6 helical membrane-spanning segments follow: residues valine 13–leucine 33, leucine 77–valine 97, leucine 129–isoleucine 149, leucine 183–valine 203, isoleucine 230–leucine 250, and leucine 266–leucine 286.

Belongs to the mitochondrial carrier (TC 2.A.29) family.

It is found in the mitochondrion inner membrane. Functionally, transport of FAD from the cytosol to the mitochondrial matrix. This chain is Mitochondrial FAD carrier protein FLX1 (FLX1), found in Saccharomyces cerevisiae (strain ATCC 204508 / S288c) (Baker's yeast).